Here is an 80-residue protein sequence, read N- to C-terminus: Conotoxin Bu14 (80 aa).

An N-terminal signal peptide occupies residues 1-8 (AACQLGTA). Residues 9 to 40 (ASFARDKQDYPAVRSDGRQDSKDSTLDRIAKR) constitute a propeptide that is removed on maturation. Cystine bridges form between cysteine 41–cysteine 55, cysteine 48–cysteine 59, and cysteine 54–cysteine 69.

Belongs to the conotoxin O1 superfamily. Expressed by the venom duct.

It is found in the secreted. The polypeptide is Conotoxin Bu14 (Conus bullatus (Bubble cone)).